A 329-amino-acid polypeptide reads, in one-letter code: Secretory carrier-associated membrane protein 2 (329 aa).

A disordered region spans residues 1-74; the sequence is MSAFDTNPFA…PSVEPAQPTP (74 aa). Residues 1–153 are Cytoplasmic-facing; the sequence is MSAFDTNPFA…DYQRICKMLY (153 aa). Composition is skewed to polar residues over residues 19 to 31 and 40 to 51; these read QDPSVTQLTNAPQ and FSETNAATTVPA. The helical transmembrane segment at 154–174 threads the bilayer; sequence YLWMLHSVTLFLNLLACLAWF. Over 175 to 181 the chain is Lumenal; that stretch reads TSDAANG. The chain crosses the membrane as a helical span at residues 182–202; it reads TAFGLSILWFLIFTPCAFLCW. The Cytoplasmic portion of the chain corresponds to 203–218; that stretch reads YRPIYKAFRSDNSFSF. An interaction with SLC9A7 region spans residues 203–218; it reads YRPIYKAFRSDNSFSF. Residues 219–239 form a helical membrane-spanning segment; that stretch reads FVFFFVFFCQIGIYFIQLIGL. Over 240–262 the chain is Lumenal; that stretch reads PNLGTSGWLAALSTMKNGPLAVT. The chain crosses the membrane as a helical span at residues 263 to 283; sequence IIMMVVAGFFTLCAGLSLFLL. Topologically, residues 284-329 are cytoplasmic; it reads QRVHAFYRRTGASFQQAQEEFSQGIFSSRTFRGAASSAARGAFQGN. A phosphoserine mark is found at serine 319 and serine 320.

This sequence belongs to the SCAMP family. In terms of assembly, interacts with SLC6A4 and SLC9A7. Interacts with SLC9A5; this interaction regulates SLC9A5 cell-surface targeting and SLC9A5 activity.

The protein localises to the golgi apparatus. Its subcellular location is the trans-Golgi network membrane. It localises to the recycling endosome membrane. Functions in post-Golgi recycling pathways. Acts as a recycling carrier to the cell surface. The sequence is that of Secretory carrier-associated membrane protein 2 (Scamp2) from Mus musculus (Mouse).